We begin with the raw amino-acid sequence, 203 residues long: uncharacterized protein (203 aa).

Positions Leu-174–His-203 are disordered.

This is an uncharacterized protein from Homo sapiens (Human).